The chain runs to 977 residues: Collagen alpha-2(I) chain (977 aa).

Positions Ser-1–Ser-977 are disordered. 4-hydroxyproline is present on residues Pro-10, Pro-13, Pro-28, and Pro-34. The span at Gly-17–Lys-66 shows a compositional bias: low complexity. At Lys-91 the chain carries 5-hydroxylysine; alternate. Lys-91 is a glycosylation site (O-linked (Gal...) hydroxylysine; alternate). Composition is skewed to low complexity over residues Ser-138–Pro-159 and Pro-205–Pro-226. Residues Gly-258–Gly-267 show a composition bias toward gly residues. Residues Ser-268–Ser-278 are compositionally biased toward low complexity. The segment covering Gly-300–Gly-309 has biased composition (gly residues). A compositionally biased stretch (low complexity) spans Pro-322–Ser-338. 2 positions are modified to 4-hydroxyproline: Pro-344 and Pro-347. A compositionally biased stretch (low complexity) spans Leu-373–Ala-392. Residues Gly-441–Gly-450 show a composition bias toward gly residues. Low complexity-rich tracts occupy residues Ser-497–Pro-514 and Glu-526–Ala-536. Residues Gly-537–Gly-546 show a composition bias toward gly residues. Low complexity-rich tracts occupy residues Val-569–Ala-605 and Val-620–Ala-640. Residues Lys-641–Lys-650 show a composition bias toward basic and acidic residues. Residues Pro-658–Ala-668 show a composition bias toward low complexity. Residues Gly-678–Gly-687 are compositionally biased toward gly residues. Residues Thr-689–Thr-698 show a composition bias toward low complexity. The span at Gly-735 to Gly-744 shows a compositional bias: gly residues. 2 stretches are compositionally biased toward low complexity: residues Ser-752 to Pro-779 and Leu-787 to Pro-797. Residues Gly-798 to Gly-817 show a composition bias toward gly residues. 2 stretches are compositionally biased toward low complexity: residues Pro-853 to Lys-871 and Pro-878 to Pro-898. Residues Arg-902–Pro-913 are compositionally biased toward basic and acidic residues.

The protein belongs to the fibrillar collagen family. As to quaternary structure, trimers of one alpha 2(I) and two alpha 1(I) chains. Interacts (via C-terminus) with TMEM131 (via PapD-L domain); the interaction is direct and is involved in assembly and TRAPPIII ER-to-Golgi transport complex-dependent secretion of collagen. In terms of processing, prolines at the third position of the tripeptide repeating unit (G-X-Y) are hydroxylated in some or all of the chains. In terms of tissue distribution, expressed in bones.

The protein localises to the secreted. Its subcellular location is the extracellular space. The protein resides in the extracellular matrix. Its function is as follows. Type I collagen is a member of group I collagen (fibrillar forming collagen). In Scelidodon sp. (strain SLP-2019) (South American ground sloth), this protein is Collagen alpha-2(I) chain.